The following is a 315-amino-acid chain: Methionyl-tRNA formyltransferase (315 aa).

113–116 is a binding site for (6S)-5,6,7,8-tetrahydrofolate; it reads SLLP.

The protein belongs to the Fmt family.

It carries out the reaction L-methionyl-tRNA(fMet) + (6R)-10-formyltetrahydrofolate = N-formyl-L-methionyl-tRNA(fMet) + (6S)-5,6,7,8-tetrahydrofolate + H(+). In terms of biological role, attaches a formyl group to the free amino group of methionyl-tRNA(fMet). The formyl group appears to play a dual role in the initiator identity of N-formylmethionyl-tRNA by promoting its recognition by IF2 and preventing the misappropriation of this tRNA by the elongation apparatus. The protein is Methionyl-tRNA formyltransferase of Escherichia coli O127:H6 (strain E2348/69 / EPEC).